The chain runs to 349 residues: Isopentenyl-diphosphate delta-isomerase (349 aa).

6 to 7 (RK) is a substrate binding site. Residues 62–64 (AMT), Ser-93, and Asn-122 contribute to the FMN site. Gln-152 lines the substrate pocket. Glu-153 contacts Mg(2+). FMN is bound by residues Lys-184, Thr-214, 258 to 259 (GG), and 280 to 281 (AG).

The protein belongs to the IPP isomerase type 2 family. Homooctamer. Dimer of tetramers. FMN is required as a cofactor. The cofactor is NADPH. Mg(2+) serves as cofactor.

It localises to the cytoplasm. It carries out the reaction isopentenyl diphosphate = dimethylallyl diphosphate. Involved in the biosynthesis of isoprenoids. Catalyzes the 1,3-allylic rearrangement of the homoallylic substrate isopentenyl (IPP) to its allylic isomer, dimethylallyl diphosphate (DMAPP). The sequence is that of Isopentenyl-diphosphate delta-isomerase from Bacillus cereus (strain AH820).